The chain runs to 515 residues: Glucose-6-phosphate 1-dehydrogenase X (515 aa).

Ala-2 is subject to N-acetylalanine. Residues Gly-38–Lys-45, Arg-72, Tyr-147, and Lys-171 each bind NADP(+). Residues Lys-171, His-201–Lys-205, Glu-239, and Asp-258 each bind D-glucose 6-phosphate. His-263 functions as the Proton acceptor in the catalytic mechanism. Arg-357 serves as a coordination point for NADP(+). D-glucose 6-phosphate contacts are provided by Lys-360 and Arg-365. 3 residues coordinate NADP(+): Lys-366, Arg-370, and Arg-393. Gln-395 is a binding site for D-glucose 6-phosphate. NADP(+) is bound by residues Tyr-401–Lys-403, Asp-421–Thr-423, Arg-487, and Tyr-503. Tyr-507 is modified (phosphotyrosine). NADP(+) is bound at residue Trp-509.

Belongs to the glucose-6-phosphate dehydrogenase family. As to quaternary structure, homotetramer; dimer of dimers. Interacts with SIRT2; the interaction is enhanced by H(2)O(2) treatment. Forms a ternary complex with ALDOB and TP53; this interaction is direct. ALDOB stabilizes the complex inhibiting G6PD activity and keeping oxidative pentose phosphate metabolism in check. Acetylated by ELP3 at Lys-403; acetylation inhibits its homodimerization and enzyme activity. Deacetylated by SIRT2 at Lys-403; deacetylation stimulates its enzyme activity.

It is found in the cytoplasm. Its subcellular location is the cytosol. It localises to the membrane. It catalyses the reaction D-glucose 6-phosphate + NADP(+) = 6-phospho-D-glucono-1,5-lactone + NADPH + H(+). The protein operates within carbohydrate degradation; pentose phosphate pathway; D-ribulose 5-phosphate from D-glucose 6-phosphate (oxidative stage): step 1/3. In terms of biological role, catalyzes the rate-limiting step of the oxidative pentose-phosphate pathway, which represents a route for the dissimilation of carbohydrates besides glycolysis. The main function of this enzyme is to provide reducing power (NADPH) and pentose phosphates for fatty acid and nucleic acid synthesis. In Mus musculus (Mouse), this protein is Glucose-6-phosphate 1-dehydrogenase X (G6pdx).